The sequence spans 424 residues: Histidine--tRNA ligase (424 aa).

The protein belongs to the class-II aminoacyl-tRNA synthetase family. As to quaternary structure, homodimer.

The protein resides in the cytoplasm. It carries out the reaction tRNA(His) + L-histidine + ATP = L-histidyl-tRNA(His) + AMP + diphosphate + H(+). This Sodalis glossinidius (strain morsitans) protein is Histidine--tRNA ligase.